The primary structure comprises 154 residues: Transcriptional repressor NrdR (154 aa).

A zinc finger spans residues C3–C34. Positions L49 to V139 constitute an ATP-cone domain.

Belongs to the NrdR family. It depends on Zn(2+) as a cofactor.

Negatively regulates transcription of bacterial ribonucleotide reductase nrd genes and operons by binding to NrdR-boxes. The protein is Transcriptional repressor NrdR of Listeria innocua serovar 6a (strain ATCC BAA-680 / CLIP 11262).